Reading from the N-terminus, the 511-residue chain is Ectonucleoside triphosphate diphosphohydrolase 1 (511 aa).

At 1-16 (MEDIKDSKVKRFCSKN) the chain is on the cytoplasmic side. A helical transmembrane segment spans residues 17–37 (ILIILGFSSVLAVIALIAVGL). The Extracellular portion of the chain corresponds to 38-478 (THNKPLPENV…LSPPLPHSTY (441 aa)). The interval 46 to 171 (NVKYGIVLDA…DFQGAKIITG (126 aa)) is N-terminal lobe. A glycan (N-linked (GlcNAc...) asparagine) is linked at Asn73. The cysteines at positions 84 and 108 are disulfide-linked. Glu174 serves as the catalytic Proton acceptor. Positions 205-441 (QATFGALDLG…GTSWDQIHFM (237 aa)) are C-terminal lobe. N-linked (GlcNAc...) asparagine glycans are attached at residues Asn226, Asn291, and Asn333. 2 disulfide bridges follow: Cys254-Cys300 and Cys281-Cys324. Residues Cys337 and Cys342 are joined by a disulfide bond. An N-linked (GlcNAc...) asparagine glycan is attached at Asn374. Cys391 and Cys414 are disulfide-bonded. N-linked (GlcNAc...) asparagine glycans are attached at residues Asn429 and Asn458. A helical transmembrane segment spans residues 479-499 (ISLMVLFSLVLVAMVITGLFI). The Cytoplasmic segment spans residues 500-511 (FSKPSYFWKEAV).

The protein belongs to the GDA1/CD39 NTPase family. In terms of assembly, homodimer; disulfide-linked. Ca(2+) is required as a cofactor. Mg(2+) serves as cofactor. Post-translationally, N-glycosylated. The N-terminus is blocked. In terms of processing, palmitoylated on Cys-13; which is required for caveola targeting. In terms of tissue distribution, expressed in primary neurons and astrocytes, kidney, liver, muscle, thymus, lung and spleen.

The protein localises to the membrane. It is found in the caveola. It catalyses the reaction a ribonucleoside 5'-triphosphate + 2 H2O = a ribonucleoside 5'-phosphate + 2 phosphate + 2 H(+). The enzyme catalyses a ribonucleoside 5'-triphosphate + H2O = a ribonucleoside 5'-diphosphate + phosphate + H(+). It carries out the reaction a ribonucleoside 5'-diphosphate + H2O = a ribonucleoside 5'-phosphate + phosphate + H(+). The catalysed reaction is ATP + 2 H2O = AMP + 2 phosphate + 2 H(+). It catalyses the reaction ATP + H2O = ADP + phosphate + H(+). The enzyme catalyses ADP + H2O = AMP + phosphate + H(+). It carries out the reaction CTP + 2 H2O = CMP + 2 phosphate + 2 H(+). The catalysed reaction is CTP + H2O = CDP + phosphate + H(+). It catalyses the reaction CDP + H2O = CMP + phosphate + H(+). The enzyme catalyses GTP + 2 H2O = GMP + 2 phosphate + 2 H(+). It carries out the reaction GTP + H2O = GDP + phosphate + H(+). The catalysed reaction is GDP + H2O = GMP + phosphate + H(+). It catalyses the reaction ITP + 2 H2O = IMP + 2 phosphate + 2 H(+). The enzyme catalyses ITP + H2O = IDP + phosphate + H(+). It carries out the reaction IDP + H2O = IMP + phosphate + H(+). The catalysed reaction is UTP + 2 H2O = UMP + 2 phosphate + 2 H(+). It catalyses the reaction UTP + H2O = UDP + phosphate + H(+). The enzyme catalyses UDP + H2O = UMP + phosphate + H(+). In terms of biological role, catalyzes the hydrolysis of both di- and triphosphate nucleotides (NDPs and NTPs) and hydrolyze NTPs to nucleotide monophosphates (NMPs) in two distinct successive phosphate-releasing steps, with NDPs as intermediates and participates in the regulation of extracellular levels of nucleotides. By hydrolyzing proinflammatory ATP and platelet-activating ADP to AMP, it blocks platelet aggregation and supports blood flow. The chain is Ectonucleoside triphosphate diphosphohydrolase 1 from Rattus norvegicus (Rat).